We begin with the raw amino-acid sequence, 95 residues long: UPF0473 protein GWCH70_2487 (95 aa).

This sequence belongs to the UPF0473 family.

This is UPF0473 protein GWCH70_2487 from Geobacillus sp. (strain WCH70).